The chain runs to 305 residues: Ribonuclease BN (305 aa).

Residues His64, His66, Asp68, His69, His141, Asp212, and His270 each contribute to the Zn(2+) site. The Proton acceptor role is filled by Asp68.

The protein belongs to the RNase Z family. RNase BN subfamily. In terms of assembly, homodimer. It depends on Zn(2+) as a cofactor.

Its function is as follows. Zinc phosphodiesterase, which has both exoribonuclease and endoribonuclease activities. This is Ribonuclease BN from Escherichia coli O127:H6 (strain E2348/69 / EPEC).